Consider the following 397-residue polypeptide: Cytochrome b (397 aa).

Transmembrane regions (helical) follow at residues 48-68 (FGSMLGLCLVIQLLSGLLLSA), 92-113 (WMLRNIHANGSSMFFICIYAHI), 128-148 (WYFGVHLFLLTMAEAFLGYTL), and 193-213 (FYTLHFLLPFVMVAVVFLHLF). Positions 98 and 112 each coordinate heme b. His-197 and His-211 together coordinate heme b. Position 216 (His-216) interacts with a ubiquinone. The next 4 helical transmembrane spans lie at 241-261 (IKDLFGYVCFSFFFMYLVCVD), 303-323 (AGGVYVMFLSIVVLYLIPTLH), 335-355 (LNQVVFWVLVGSFISLTWIGA), and 362-382 (YIILGSAFQLFISLVYCWTPF).

Belongs to the cytochrome b family. As to quaternary structure, the main subunits of complex b-c1 are: cytochrome b, cytochrome c1 and the Rieske protein. Heme b is required as a cofactor.

It localises to the mitochondrion inner membrane. Its function is as follows. Component of the ubiquinol-cytochrome c reductase complex (complex III or cytochrome b-c1 complex) that is part of the mitochondrial respiratory chain. The b-c1 complex mediates electron transfer from ubiquinol to cytochrome c. Contributes to the generation of a proton gradient across the mitochondrial membrane that is then used for ATP synthesis. This is Cytochrome b (MT-CYB) from Mytilus edulis (Blue mussel).